A 654-amino-acid polypeptide reads, in one-letter code: Protein fem-1 homolog A-like (654 aa).

ANK repeat units follow at residues 2-31 (DLHTAVYNAAHDGKLPLLQKLLASRGREEL), 40-70 (GGGTPLLIAARRGHLDVVEYLVDHCGASVEA), 82-111 (EGAPPLWAASAAGHLAVVRSLLHRGASVNR), 115-145 (TNSTPLRAACFNGHLDVVRCLVGEHKADLEV), 149-178 (HGHTCLMISCYKGHREIARYLLERGAQVNR), 182-211 (KGNTALHDCAESGSLEILQLLLSCHARMER), and 214-243 (YGMTPLLAASITGHTNIVEYLIQEQPSHEQ). Phosphoserine is present on Ser108. The tract at residues 241–265 (HEQLSGTELPGEGSSQMAGNHCSTP) is disordered. The segment covering 253-263 (GSSQMAGNHCS) has biased composition (polar residues). TPR repeat units lie at residues 283–317 (VEALELLGATYVDKKRDLLGALKHWRRAMELRHQG) and 375–408 (SYYIRYRGAVYADSGNFERCIRLWKYALDMQQNN). ANK repeat units lie at residues 519–561 (NGFT…DPDS) and 565–594 (DNNSPLHIAAQNNCPAIMDALIEAGAHMDA). Ser608 is modified (phosphoserine).

Belongs to the fem-1 family. Component of a CRL2 E3 ubiquitin-protein ligase complex, also named ECS (Elongin BC-CUL2/5-SOCS-box protein) complex, composed of CUL2, Elongin BC (ELOB and ELOC), RBX1 and substrate-specific adapter FEM1A.

It localises to the mitochondrion. The protein localises to the cytoplasm. It participates in protein modification; protein ubiquitination. In terms of biological role, substrate-recognition component of a Cul2-RING (CRL2) E3 ubiquitin-protein ligase complex of the DesCEND (destruction via C-end degrons) pathway, which recognizes a C-degron located at the extreme C terminus of target proteins, leading to their ubiquitination and degradation. The C-degron recognized by the DesCEND pathway is usually a motif of less than ten residues and can be present in full-length proteins, truncated proteins or proteolytically cleaved forms. The CRL2(FEM1A) complex specifically recognizes proteins with an arginine at the C-terminus: recognizes and binds proteins ending with -Lys/Arg-Xaa-Arg and -Lys/Arg-Xaa-Xaa-Arg C-degrons, such as SIL1 or OR51B2, leading to their ubiquitination and degradation. This is Protein fem-1 homolog A-like from Mus musculus (Mouse).